A 429-amino-acid polypeptide reads, in one-letter code: Protein cereblon (429 aa).

The interval 1–30 (MGNHLPLLPAESEEEDEMEVEDQDSKEAKK) is disordered. Residues 11–22 (ESEEEDEMEVED) show a composition bias toward acidic residues. Ser12 carries the post-translational modification Phosphoserine. The region spanning 68–306 (IPVLPQVMMI…CELDIMNKCT (239 aa)) is the Lon N-terminal domain. The region spanning 305–413 (CTSLCCKQCQ…LTRSALLPTI (109 aa)) is the CULT domain. Zn(2+)-binding residues include Cys310 and Cys313. His365, Trp367, and Trp373 together coordinate (S)-thalidomide. 2 residues coordinate Zn(2+): Cys378 and Cys381.

The protein belongs to the CRBN family. As to quaternary structure, component of a DCX (DDB1-CUL4-X-box) protein ligase complex, at least composed of CRBN, CUL4A, DDB1 and RBX1. Interacts directly with DDB1. Interacts with KCNT1. Interacts with ILF2. Interacts with TRAF6 and ECSIT. Ubiquitinated, ubiquitination is mediated by its own DCX protein ligase complex.

Its subcellular location is the cytoplasm. It localises to the nucleus. The protein resides in the membrane. Its pathway is protein modification; protein ubiquitination. Functionally, substrate recognition component of a DCX (DDB1-CUL4-X-box) E3 protein ligase complex that mediates the ubiquitination and subsequent proteasomal degradation of target proteins, such as MEIS2, ILF2 or GLUL. Normal degradation of key regulatory proteins is required for normal limb outgrowth and expression of the fibroblast growth factor FGF8. Maintains presynaptic glutamate release and consequently cognitive functions, such as memory and learning, by negatively regulating large-conductance calcium-activated potassium (BK) channels in excitatory neurons. Likely to function by regulating the assembly and neuronal surface expression of BK channels via its interaction with KCNT1. May also be involved in regulating anxiety-like behaviors via a BK channel-independent mechanism. Plays a negative role in TLR4 signaling by interacting with TRAF6 and ECSIT, leading to inhibition of ECSIT ubiquitination, an important step of the signaling. This is Protein cereblon (CRBN) from Pongo abelii (Sumatran orangutan).